The primary structure comprises 599 residues: E3 ubiquitin-protein ligase Kcmf1 (599 aa).

The segment at 4–60 (HEGVSCDSCLKSNFNGRRYKCLICYDYDLCADCYEDGVTSTRHLVEHPMQCILTRSD) adopts a ZZ-type zinc-finger fold. 8 residues coordinate Zn(2+): cysteine 9, cysteine 12, cysteine 24, cysteine 27, cysteine 33, cysteine 36, histidine 46, and histidine 50. The segment at 78-101 (FTCPYCKKMGFSDATLLEHVSAEH) adopts a C2H2-type zinc-finger fold. Disordered regions lie at residues 155 to 193 (HGGG…PSGR), 229 to 253 (DRQQ…VSTS), 269 to 294 (GSGG…NLRT), 466 to 486 (VEQQ…VNQM), and 507 to 599 (NTTQ…PDTR). 2 stretches are compositionally biased toward low complexity: residues 160–170 (RRIPGRTLGGP) and 180–192 (SSSS…SPSG). The segment covering 269 to 285 (GSGGSGAVGSGSGGGSG) has biased composition (gly residues). Over residues 513 to 532 (GTGGLGGAGATAAPGGGASG) the composition is skewed to gly residues. The segment covering 538–547 (TADRGIERRS) has biased composition (basic and acidic residues). Over residues 559 to 593 (SQQPQQQQQSTANPAASQQKYKQNASAATAAGNTN) the composition is skewed to low complexity.

The protein belongs to the KCMF1 family. As to quaternary structure, interacts with poe.

It carries out the reaction S-ubiquitinyl-[E2 ubiquitin-conjugating enzyme]-L-cysteine + [acceptor protein]-L-lysine = [E2 ubiquitin-conjugating enzyme]-L-cysteine + N(6)-ubiquitinyl-[acceptor protein]-L-lysine.. Has intrinsic E3 ubiquitin ligase activity and promotes ubiquitination. Involved in the negative regulation of the Ras/MAPK signaling pathway in the wing by acting with the E2 enzyme Unc6 and the putative E3 ligases poe and Ufd4 to mediate the ubiquitination and proteasomal degradation of rl/MAPK. The sequence is that of E3 ubiquitin-protein ligase Kcmf1 from Drosophila melanogaster (Fruit fly).